Consider the following 81-residue polypeptide: CLAVATA3/ESR (CLE)-related protein 5 (81 aa).

An N-terminal signal peptide occupies residues 1–26 (MATLILKQTLIILLIIFSLQTLSSQA). Residues proline 73 and proline 76 each carry the hydroxyproline modification. A glycan (O-linked (Ara...) hydroxyproline) is linked at proline 76.

Belongs to the CLV3/ESR signal peptide family. The O-glycosylation (arabinosylation) of the hydroxyproline Pro-76 enhances binding affinity of the CLE5p peptide for its receptor. In terms of tissue distribution, mostly expressed in roots, and, to a lower extent, in seedlings, stems, apex, flowers and siliques.

The protein resides in the secreted. Its subcellular location is the extracellular space. Its function is as follows. Extracellular signal peptide that regulates cell fate. This chain is CLAVATA3/ESR (CLE)-related protein 5, found in Arabidopsis thaliana (Mouse-ear cress).